A 296-amino-acid polypeptide reads, in one-letter code: MENNAAEIYGKFIINLARYIPPGTMIDTDFRDCMSRQMKLPPLYTSASKNVYDMTKALQNRGLISSKSIDQLFSAMIKYPTLHDVMKNTFVLAEQLLTEEENIASLSLLSLEDKASTPPPKEPTLSETVKELKDLIRTVADEHMKMKREHEAAMKELTLLINNQKQQQQQPVPMPRNSTATRPKNLAIPPRPLTNQYVCEGNKVKYIIKRGQDFVKFFDYIEDDVVKTPKFLYFLKKRFNIDLTNEQARSIHMGLIFQPIYNIDGDVTEIIKMIHDLGELSVYDRLLNEYVDKIVQ.

A coiled-coil region spans residues 129-170; sequence VKELKDLIRTVADEHMKMKREHEAAMKELTLLINNQKQQQQQ. The segment at 165–187 is disordered; sequence KQQQQQPVPMPRNSTATRPKNLA.

This is an uncharacterized protein from Ostreid herpesvirus 1 (isolate France) (OsHV-1).